Reading from the N-terminus, the 215-residue chain is Adenylate kinase (215 aa).

Residue 10 to 15 (GAGKGT) coordinates ATP. Positions 30–59 (STGDMFRAAMKNNTELGKKAKSFMDNGDLV) are NMP. AMP-binding positions include T31, R36, 57–59 (DLV), 85–88 (GFPR), and Q92. Positions 126–163 (GRWICRTCGKTYHEIYNPPKVPGKCDLDGGELYQRDDD) are LID. R127 provides a ligand contact to ATP. Zn(2+)-binding residues include C130 and C133. 136-137 (TY) is an ATP binding site. 2 residues coordinate Zn(2+): C150 and D153. Residues R160 and R171 each contribute to the AMP site. Q199 is a binding site for ATP.

Belongs to the adenylate kinase family. As to quaternary structure, monomer.

It localises to the cytoplasm. It catalyses the reaction AMP + ATP = 2 ADP. It functions in the pathway purine metabolism; AMP biosynthesis via salvage pathway; AMP from ADP: step 1/1. In terms of biological role, catalyzes the reversible transfer of the terminal phosphate group between ATP and AMP. Plays an important role in cellular energy homeostasis and in adenine nucleotide metabolism. The polypeptide is Adenylate kinase (Listeria monocytogenes serotype 4b (strain CLIP80459)).